We begin with the raw amino-acid sequence, 944 residues long: Envelope glycoprotein B (944 aa).

Disordered stretches follow at residues 1-37 and 68-108; these read MGPP…RPGS and TDGG…RVTG. The signal sequence occupies residues 1–55; it reads MGPPPPLRRQRLLLPRPSRRRPPARLASGRRSSRPGSSWTWYATLIASLVWYPTV. Low complexity predominate over residues 24-37; the sequence is ARLASGRRSSRPGS. Residues 56 to 785 lie on the Virion surface side of the membrane; the sequence is SSTTLEATVV…GGFVSFFTNP (730 aa). Residues 71–85 show a composition bias toward gly residues; sequence GATGQASGGGGGGAG. Over residues 89-99 the composition is skewed to polar residues; that stretch reads PSESPETSADT. An N-linked (GlcNAc...) asparagine; by host glycan is attached at asparagine 114. 5 cysteine pairs are disulfide-bonded: cysteine 125–cysteine 577, cysteine 142–cysteine 533, cysteine 215–cysteine 280, cysteine 372–cysteine 420, and cysteine 608–cysteine 645. Positions 182 to 188 are involved in fusion and/or binding to host membrane; that stretch reads SYAYIYT. Asparagine 238 is a glycosylation site (N-linked (GlcNAc...) asparagine; by host). Residues 267 to 274 are involved in fusion and/or binding to host membrane; that stretch reads GSTWLYKE. 7 N-linked (GlcNAc...) asparagine; by host glycosylation sites follow: asparagine 369, asparagine 409, asparagine 414, asparagine 426, asparagine 481, asparagine 485, and asparagine 620. Hydrophobic membrane proximal region stretches follow at residues 731-783 and 762-782; these read ITSK…SFFT and LVLG…VSFF. Residues 786–806 form a helical membrane-spanning segment; sequence FGSLTLIILVVAVVVIVFLLY. At 807 to 944 the chain is on the intravirion side; the sequence is QRQRSAVRQP…RDTGSDSELA (138 aa). Disordered stretches follow at residues 834–878 and 902–944; these read TVTT…SATA and REVP…SELA. Positions 931–934 match the Internalization motif motif; that stretch reads YRRL.

Belongs to the herpesviridae glycoprotein B family. In terms of assembly, homotrimer; disulfide-linked. Binds to heparan sulfate proteoglycans. Interacts with gH/gL heterodimer. A proteolytic cleavage by host furin generates two subunits that remain linked by disulfide bonds.

It localises to the virion membrane. It is found in the host cell membrane. The protein localises to the host endosome membrane. Its subcellular location is the host Golgi apparatus membrane. In terms of biological role, envelope glycoprotein that forms spikes at the surface of virion envelope. Essential for the initial attachment to heparan sulfate moieties of the host cell surface proteoglycans. Involved in fusion of viral and cellular membranes leading to virus entry into the host cell. Following initial binding to its host receptors, membrane fusion is mediated by the fusion machinery composed at least of gB and the heterodimer gH/gL. May be involved in the fusion between the virion envelope and the outer nuclear membrane during virion egress. This chain is Envelope glycoprotein B, found in Tupaiid herpesvirus (strain 2) (TuHV-2).